We begin with the raw amino-acid sequence, 424 residues long: S-phase kinase-associated protein 2 (424 aa).

Positions 1-220 (MHRKHLQEIP…LSLEGLRLSD (220 aa)) are mediates interaction with hepatitis C virus non-structural protein NS5A. The tract at residues 39–73 (SALEKEEPDSENIPQELLSNLGHPESPPRKRLKSK) is disordered. Phosphoserine is present on serine 64. The Nuclear localization signal motif lies at 67–73 (RKRLKSK). N6-acetyllysine; by p300/EP300 is present on residues lysine 68 and lysine 71. Phosphoserine is present on residues serine 72 and serine 75. Residues 94–140 (GVSWDSLPDELLLGIFSCLCLPELLKVSGVCKRWYRLASDESLWQTL) form the F-box domain. 10 LRR repeats span residues 151–176 (VTGRLLSQGVIAFRCPRSFMDQPLAE), 177–204 (HFSPFRVQHMDLSNSVIEVSTLHGILSQ), 210–234 (NLSLEGLRLSDPIVNTLAKNSNLVR), 235–257 (LNLSGCSGFSEFALQTLLSSCSR), 258–284 (LDELNLSWCFDFTEKHVQVAVAHVSET), 286–308 (TQLNLSGYRKNLQKSDLSTLVRR), 309–330 (CPNLVHLDLSDSVMLKNDCFQE), 334–356 (LNYLQHLSLSRCYDIIPETLLEL), 359–378 (IPTLKTLQVFGIVPDGTLQL), and 380–401 (KEALPHLQINCSHFTTIARPTI). Serine 179 is subject to Phosphoserine. Residues 402–424 (GNKKNQEIWGIKCRLTLQKPSCL) are mediates interaction with IFI27.

In terms of assembly, part of a SCF(SKP2) complex consisting of CUL1, RBX1, SKP1 and SKP2. Component of a SCF(SKP2)-like complex containing CUL1, SKP1, TRIM21 and SKP2. Interacts directly with CUL1 and SKP1. Interacts with CKS1. Interacts with ASB2 which is the substrate-recognition component of a probable ECS E3 ubiquitin-protein ligase complex; ASB2 is likely to bridge the formation of dimeric E3-ubiquitin-protein ligase complexes composed of an ECS complex and an SCF(SKP2) complex. Interacts with the cyclin-A-CDK2 complex. Interacts with ORC1, phosphorylated CDT1, phosphorylated RBL2, ELF4, phosphorylated RAG2, FOXO1, UBP43, MYC, TOB1, TAL1 and KMT2A/MLL1. Interacts with TRIM21. Interacts with cyclin-E. Interacts with IFI27; promotes the ubiquitin-mediated proteasomal degradation of hepatitis C virus/HCV non-structural protein NS5A. Interacts with CARM1. As to quaternary structure, (Microbial infection) Interacts with hepatitis C virus/HCV non-structural protein NS5A; promotes the ubiquitin-mediated proteasomal degradation of NS5A. Post-translationally, phosphorylated on serine and threonine resudues in response to DNA damage, promoting 'Lys-63'-linked ubiquitination of NBN. In terms of processing, ubiquitinated by the APC/C complex, leading to its degradation by the proteasome. Deubiquitinated by USP13. Acetylation at Lys-68 and Lys-71 increases stability through impairment of APC/C-mediated proteolysis and promotes cytoplasmic retention. Deacetylated by SIRT3.

It is found in the cytoplasm. It localises to the nucleus. It functions in the pathway protein modification; protein ubiquitination. In terms of biological role, substrate recognition component of a SCF (SKP1-CUL1-F-box protein) E3 ubiquitin-protein ligase complex which mediates the ubiquitination and subsequent proteasomal degradation of target proteins involved in cell cycle progression, signal transduction and transcription. Specifically recognizes phosphorylated CDKN1B/p27kip and is involved in regulation of G1/S transition. Degradation of CDKN1B/p27kip also requires CKS1. Recognizes target proteins ORC1, CDT1, RBL2, KMT2A/MLL1, CDK9, RAG2, NBN, FOXO1, UBP43, YTHDF2, and probably MYC, TOB1 and TAL1. Degradation of TAL1 also requires STUB1. Recognizes CDKN1A in association with CCNE1 or CCNE2 and CDK2. Promotes ubiquitination and destruction of CDH1 in a CK1-dependent manner, thereby regulating cell migration. Following phosphorylation in response to DNA damage, mediates 'Lys-63'-linked ubiquitination of NBN, promoting ATM recruitment to DNA damage sites and DNA repair via homologous recombination. Functionally, through the ubiquitin-mediated proteasomal degradation of hepatitis C virus non-structural protein 5A, has an antiviral activity towards that virus. The chain is S-phase kinase-associated protein 2 (SKP2) from Homo sapiens (Human).